Consider the following 247-residue polypeptide: Ferredoxin:CoB-CoM heterodisulfide reductase subunit C (247 aa).

Positions 32-62 constitute a 4Fe-4S ferredoxin-type domain; sequence TPESLGLDRCIQCGACTASCPAARFTDYSPR. 8 residues coordinate [4Fe-4S] cluster: C41, C44, C47, C51, C84, C87, C90, and C94. The span at 216 to 240 shows a compositional bias: basic and acidic residues; the sequence is RTGTSCTEKKKNSGDLGFESDREYT. Residues 216-247 are disordered; sequence RTGTSCTEKKKNSGDLGFESDREYTGQEALTV.

Belongs to the HdrC family. The ferredoxin:CoB-CoM heterodisulfide reductase is composed of three subunits; HdrA1, HdrB1 and HdrC1. Requires [4Fe-4S] cluster as cofactor.

It localises to the cytoplasm. It catalyses the reaction coenzyme B + coenzyme M + 2 oxidized [2Fe-2S]-[ferredoxin] = coenzyme M-coenzyme B heterodisulfide + 2 reduced [2Fe-2S]-[ferredoxin] + 2 H(+). Its pathway is cofactor metabolism; coenzyme M-coenzyme B heterodisulfide reduction; coenzyme B and coenzyme M from coenzyme M-coenzyme B heterodisulfide: step 1/1. In terms of biological role, part of a complex that catalyzes the reversible reduction of CoM-S-S-CoB to the thiol-coenzymes H-S-CoM (coenzyme M) and H-S-CoB (coenzyme B). Probably involved in methylotrophic methanogenesis but not in aceticlastic methanogenesis. In Methanosarcina acetivorans (strain ATCC 35395 / DSM 2834 / JCM 12185 / C2A), this protein is Ferredoxin:CoB-CoM heterodisulfide reductase subunit C.